The following is an 85-amino-acid chain: Conotoxin Lt28.2 (85 aa).

The N-terminal stretch at 1–21 (MPKLEMMLLVLLILPLCYIDA) is a signal peptide. The propeptide occupies 22–40 (VGPPPPWNMEDEIIEHWQK).

It belongs to the conotoxin D superfamily. Post-translationally, contains 5 disulfide bonds. Expressed by the venom duct.

Its subcellular location is the secreted. Its function is as follows. Probable neurotoxin. The sequence is that of Conotoxin Lt28.2 from Conus litteratus (Lettered cone).